The primary structure comprises 407 residues: uncharacterized protein (407 aa).

The protein belongs to the peptidase U32 family.

This is an uncharacterized protein from Methanocaldococcus jannaschii (strain ATCC 43067 / DSM 2661 / JAL-1 / JCM 10045 / NBRC 100440) (Methanococcus jannaschii).